Reading from the N-terminus, the 133-residue chain is ATP synthase epsilon chain, chloroplastic (133 aa).

The protein belongs to the ATPase epsilon chain family. As to quaternary structure, F-type ATPases have 2 components, CF(1) - the catalytic core - and CF(0) - the membrane proton channel. CF(1) has five subunits: alpha(3), beta(3), gamma(1), delta(1), epsilon(1). CF(0) has three main subunits: a, b and c.

It is found in the plastid. Its subcellular location is the chloroplast thylakoid membrane. Produces ATP from ADP in the presence of a proton gradient across the membrane. The protein is ATP synthase epsilon chain, chloroplastic of Daucus carota (Wild carrot).